We begin with the raw amino-acid sequence, 537 residues long: MTSNTLHYTVEKSSILGPEWQSLYSTAEPVDFDKSHFEQAMLNVIRQPNVNSTVILRADMLIDNEYDLESGSCVKSEKKDIALGSDEGILKVNIDDLAPRSVPIALADVTTKFQFVRRIVPRNPFKDAIINQTCLVMNSNSDASTSLVIYIPHFDNAELCPFYIPQVAAVGILLHDHQLSVHYIPFAGQKELLFDPKQRVVRTAFRLLQTAYKHSKGVKDGYAKRVMHDVVVDKVLFQDQYIHLKKKYSKFLVDNWAESTDPKKHVFEDIAIAAFLIELWKKIYGAENTTNKMQFRDLGCGNGVLCYILIQEGFKGLGIDARQRKSWSIYPAEVKRCLKEQVIIPSVLLRPHPTMKLHAPHLQHNGRFFPMQLVSPQLIAPATVMYSSADLLQSPQVNIAEFPPDTFIIGNHSDELTCWIPLLGYPFMVIPCCSHNLSGNRIRYAVRDVERAKKLGNSTYQGLVDRVEYLADRVGWKTEKEMLRIPSTRNAAIIGYKNDKLNEFPTDEIYSILMEEGGADGWVANTMNLMKSNPRGH.

The protein belongs to the TRM44 family.

It localises to the cytoplasm. The enzyme catalyses uridine(44) in tRNA(Ser) + S-adenosyl-L-methionine = 2'-O-methyluridine(44) in tRNA(Ser) + S-adenosyl-L-homocysteine + H(+). Probable adenosyl-L-methionine (AdoMet)-dependent tRNA (uracil-O(2)-)-methyltransferase. The sequence is that of tRNA (uracil-O(2)-)-methyltransferase (TRM44) from Kluyveromyces lactis (strain ATCC 8585 / CBS 2359 / DSM 70799 / NBRC 1267 / NRRL Y-1140 / WM37) (Yeast).